The chain runs to 97 residues: Antitoxin YafN (97 aa).

This sequence belongs to the phD/YefM antitoxin family. In terms of assembly, probably forms a complex with the mRNA interferase YafO which inhibits the mRNA interferase activity.

Functionally, antitoxin component of a type II toxin-antitoxin (TA) system. Functions as an mRNA interferase antitoxin; overexpression prevents YafO-mediated cessation of cell growth and inhibition of cell proliferation. This Escherichia coli (strain K12) protein is Antitoxin YafN (yafN).